The sequence spans 372 residues: Protein REVEILLE 7 (372 aa).

Residues 71 to 125 enclose the HTH myb-type domain; that stretch reads TVTKQREKWSEEEHDRFLEAIKLYGRGWRQIQEHIGTKTAVQIRSHAQKFFSKMA. Positions 98–121 form a DNA-binding region, H-T-H motif; the sequence is WRQIQEHIGTKTAVQIRSHAQKFF. Residues 124–204 form a disordered region; sequence MAQEADSRSE…RCSSPNSCTS (81 aa). Basic residues predominate over residues 145–155; that stretch reads RPKRKPAHPYP. A compositionally biased stretch (pro residues) spans 156 to 169; it reads RKSPVPYTQSPPPN. Polar residues predominate over residues 178–204; it reads KSPTSVLSSFGSEDQVNRCSSPNSCTS.

It localises to the nucleus. Transcription factor involved in phytochrome A-mediated cotyledon opening. Controlled by the central oscillator mediated by LHY and CCA1. Part of a regulatory circadian feedback loop. Regulates its own expression. This chain is Protein REVEILLE 7 (RVE7), found in Arabidopsis thaliana (Mouse-ear cress).